The following is an 883-amino-acid chain: Phosphoenolpyruvate carboxylase (883 aa).

Residues His138 and Lys546 contribute to the active site.

It belongs to the PEPCase type 1 family. Homotetramer. Mg(2+) serves as cofactor.

The catalysed reaction is oxaloacetate + phosphate = phosphoenolpyruvate + hydrogencarbonate. Its activity is regulated as follows. The enzyme has distinct binding sites for each of the allosteric effectors such as acetyl-CoA, fructose 1,6-bisphosphate, guanosine 3'-diphosphate 5'-diphosphate, long chain fatty acids, and L-aspartate. Forms oxaloacetate, a four-carbon dicarboxylic acid source for the tricarboxylic acid cycle. This chain is Phosphoenolpyruvate carboxylase, found in Escherichia coli O157:H7.